The following is a 280-amino-acid chain: Putative protein-tyrosine sulfotransferase (280 aa).

16-20 lines the 3'-phosphoadenylyl sulfate pocket; that stretch reads RSGTT. An intrachain disulfide couples C34 to C89. E37 acts as the Proton donor/acceptor in catalysis. N57 carries N-linked (GlcNAc...) asparagine glycosylation. Positions 116, 124, and 128 each coordinate 3'-phosphoadenylyl sulfate. N-linked (GlcNAc...) asparagine glycosylation is present at N136. Cysteines 158 and 165 form a disulfide. 3'-phosphoadenylyl sulfate is bound by residues Y170 and 215-224; that span reads SASQVKNSIN.

This sequence belongs to the protein sulfotransferase family.

It carries out the reaction L-tyrosyl-[protein] + 3'-phosphoadenylyl sulfate = O-sulfo-L-tyrosine-[protein] + adenosine 3',5'-bisphosphate + H(+). Catalyzes the O-sulfation of tyrosine residues within acidic motifs of polypeptides, using 3'-phosphoadenylyl sulfate (PAPS) as cosubstrate. This is Putative protein-tyrosine sulfotransferase from Caenorhabditis briggsae.